Consider the following 377-residue polypeptide: UPF0754 membrane protein BPUM_0927 (377 aa).

2 helical membrane passes run M1 to T21 and F357 to F377.

The protein belongs to the UPF0754 family.

It localises to the cell membrane. The chain is UPF0754 membrane protein BPUM_0927 from Bacillus pumilus (strain SAFR-032).